The sequence spans 1222 residues: MLAPRNTETGVHMSQTEADLALRPSPSLTSMGPTRLGPPPRRVRRFSGKAEPRPRSSRPSRRSSVDLGLLSSWSQPASLLPEPPDPPDSAGPMRSPPSNSKEHPEGTWTGAAPVKAADSACPELTVSSGGPGSREPPRVPDAAARERRREQEEKEDTETQAVATSPDGRYLKFDIEIGRGSFKTVYRGLDTDTTVEVAWCELQTRKLSRAERQRFSEEVEMLKGLQHPNIVRFYDSWKSVLRGQVCIVLVTELMTSGTLKTYLRRFREMKPRVLQRWSRQILRGLHFLHSRVPPILHRDLKCDNVFITGPSGSVKIGDLGLATLKRASFAKSVIGTPEFMAPEMYEEKYDEAVDVYAFGMCMLEMATSEYPYSECQNAAQIYRKVTSGTKPNSFYKVKMPEVKEIIEGCIRTDKNERFTIQDLLTHAFFREERGVHVELAEEDDGEKPGLKLWLRMEDARRGGRPRDNQAIEFLFQLGRDAAEEVAQEMVALGLVCEADYQPVARAVRERVAAIQRKREKLRKARELEVLPPDSGPPPATVSMTPGPPSAFPPEPEEPEADQHQSFLFRHASYSSTTSDCETDGYLSSSGFLDASDPALQPPGGMPSSPAEPHLCLPSGFALSIPRSGPGSDFSPGDSYASDAASGLSDMGEGGQMRKNPVKTLRRRPRSRLRVTSVSDQSDRVVECQLQTHNSKMVTFRFDLDGDSPEEIAAAMVYNEFILPSERDGFLSRIREIIQRVETLLKRDAGPSEATEDALSPQEEPAAMPALPGPSDAELQRSISPEQRSWAAFSTSPSSPGTPLSPGTPFSPGTPPVFPCPIFPITSPSCHPYPFSQVSSNPCPQAPSSLLPSSSGASQVPFPSPSLPTSSPLPFSPSYPQVPLHPASLPTCPSPPPLPSTTAAPLLSLASAFSLAVMTVAQSLLSPSPGLLSQSPPAPPGPLPSMPLPLASCDQESLSAQTAETENEASRNPAQPLLGDARLAPISEEGKPQLVGRFQVTSSKEPAEPPLQPASPTLSRSLKLPTPQLTSESSDTEDSAAGGPETREALAESDRAAEGLGVAIDEEKDEGKEPQIGGSSPILSQPSPVWMNYSYSSLCLSSEESESSGEDEEFWAELQNLRQKHLSEVEALQTLQKKEIEDLYSRLGKQPPPGIVAPAAMLSCRQRRLSKGSFPTSRRNSLQRSDLPGPGIMRRNSLSGSSTGSQEQRASKGVTFAGDVGRM.

Residues 1-17 (MLAPRNTETGVHMSQTE) show a composition bias toward polar residues. The tract at residues 1 to 163 (MLAPRNTETG…KEDTETQAVA (163 aa)) is disordered. The residue at position 95 (Ser-95) is a Phosphoserine. The span at 135–152 (EPPRVPDAAARERRREQE) shows a compositional bias: basic and acidic residues. Glycyl lysine isopeptide (Lys-Gly) (interchain with G-Cter in ubiquitin) cross-links involve residues Lys-154 and Lys-172. Residues 171 to 429 (LKFDIEIGRG…IQDLLTHAFF (259 aa)) form the Protein kinase domain. Ser-181 is an ATP binding site. Residues Lys-183, Lys-223, and Lys-238 each participate in a glycyl lysine isopeptide (Lys-Gly) (interchain with G-Cter in ubiquitin) cross-link. Residues 251 to 254 (TELM) and Lys-301 contribute to the ATP site. The active-site Proton acceptor is Asp-318. Residue Lys-325 forms a Glycyl lysine isopeptide (Lys-Gly) (interchain with G-Cter in ubiquitin) linkage. Phosphoserine; by autocatalysis occurs at positions 328 and 332. Residues Lys-384, Lys-390, Lys-447, and Lys-451 each participate in a glycyl lysine isopeptide (Lys-Gly) (interchain with G-Cter in ubiquitin) cross-link. A disordered region spans residues 527–562 (LEVLPPDSGPPPATVSMTPGPPSAFPPEPEEPEADQ). Residues 533–553 (DSGPPPATVSMTPGPPSAFPP) show a composition bias toward pro residues. Residues 554-564 (EPEEPEADQHQ) are interaction with KLHL3. Ser-572 is modified (phosphoserine). Disordered stretches follow at residues 591-612 (FLDA…PAEP), 626-679 (RSGP…SVSD), 747-809 (DAGP…GTPF), 836-873 (QVSS…SPLP), and 927-1087 (SPGL…QPSP). The segment covering 627–638 (SGPGSDFSPGDS) has biased composition (low complexity). Positions 659 to 672 (NPVKTLRRRPRSRL) are enriched in basic residues. 2 stretches are compositionally biased toward low complexity: residues 792-809 (FSTS…GTPF) and 845-873 (APSS…SPLP). Residues 935–946 (PPAPPGPLPSMP) are compositionally biased toward pro residues. Over residues 953 to 963 (DQESLSAQTAE) the composition is skewed to polar residues. Lys-990 is covalently cross-linked (Glycyl lysine isopeptide (Lys-Gly) (interchain with G-Cter in ubiquitin)). The short motif at 996-999 (RFQV) is the RFXV motif element. Ser-1014 carries the phosphoserine modification. The span at 1044–1056 (ETREALAESDRAA) shows a compositional bias: basic and acidic residues. Polar residues predominate over residues 1076-1086 (GGSSPILSQPS). Glycyl lysine isopeptide (Lys-Gly) (interchain with G-Cter in ubiquitin) cross-links involve residues Lys-1123, Lys-1136, and Lys-1137. The interval 1169-1222 (SKGSFPTSRRNSLQRSDLPGPGIMRRNSLSGSSTGSQEQRASKGVTFAGDVGRM) is disordered. Composition is skewed to polar residues over residues 1172-1183 (SFPTSRRNSLQR) and 1195-1207 (NSLS…SQEQ). Position 1196 is a phosphoserine (Ser-1196).

Belongs to the protein kinase superfamily. Ser/Thr protein kinase family. WNK subfamily. Interacts with the C-terminal region of KCNJ1. Interacts with WNK1 and WNK3. Interacts with KLHL3. The cofactor is Mg(2+). In terms of processing, autophosphorylated at Ser-328 and Ser-332, promoting its activation. Phosphorylated by WNK1 and WNK3. Phosphorylated at Ser-572 in a MAP3K15/ASK3-dependent process in response to osmotic stress or hypotonic low-chloride stimulation. Ubiquitinated by the BCR(KLHL3) complex, leading to its degradation. Also ubiquitinated by the BCR(KLHL2) complex.

It is found in the cell junction. It localises to the tight junction. The catalysed reaction is L-seryl-[protein] + ATP = O-phospho-L-seryl-[protein] + ADP + H(+). The enzyme catalyses L-threonyl-[protein] + ATP = O-phospho-L-threonyl-[protein] + ADP + H(+). With respect to regulation, activation requires autophosphorylation of Ser-328 and Ser-332. Autophosphorylation and subsequent activation is inhibited by increases in intracellular ionic strength: Cl(-) potently inhibits WNK4 kinase activity via direct binding. Also inhibited by K(+) ions. In terms of biological role, serine/threonine-protein kinase component of the WNK4-SPAK/OSR1 kinase cascade, which acts as a key regulator of ion transport in the distal nephron and blood pressure. The WNK4-SPAK/OSR1 kinase cascade is composed of WNK4, which mediates phosphorylation and activation of downstream kinases OXSR1/OSR1 and STK39/SPAK. Following activation, OXSR1/OSR1 and STK39/SPAK catalyze phosphorylation of ion cotransporters, such as SLC12A1/NKCC2, SLC12A2/NKCC1, SLC12A3/NCC, SLC12A5/KCC2 or SLC12A6/KCC3, regulating their activity. Acts as a molecular switch that regulates the balance between renal salt reabsorption and K(+) secretion by modulating the activities of renal transporters and channels, including the Na-Cl cotransporter SLC12A3/NCC and the K(+) channel, KCNJ1/ROMK. Regulates NaCl reabsorption in the distal nephron by activating the thiazide-sensitive Na-Cl cotransporter SLC12A3/NCC in distal convoluted tubule cells of kidney: activates SLC12A3/NCC in a OXSR1/OSR1- and STK39/SPAK-dependent process. Also acts as a scaffold protein independently of its protein kinase activity: negatively regulates cell membrane localization of various transporters and channels (CFTR, KCNJ1/ROMK, SLC4A4, SLC26A9 and TRPV4) by clathrin-dependent endocytosis. Also inhibits the activity of the epithelial Na(+) channel (ENaC) SCNN1A, SCNN1B, SCNN1D in a inase-independent mechanism. May also phosphorylate NEDD4L. This is Serine/threonine-protein kinase WNK4 from Rattus norvegicus (Rat).